Here is a 51-residue protein sequence, read N- to C-terminus: UPF0181 protein HAPS_0710 (51 aa).

Belongs to the UPF0181 family.

The chain is UPF0181 protein HAPS_0710 from Glaesserella parasuis serovar 5 (strain SH0165) (Haemophilus parasuis).